Consider the following 384-residue polypeptide: Thylakoid membrane protein TERC, chloroplastic (384 aa).

The N-terminal 48 residues, M1–S48, are a transit peptide targeting the chloroplast. Residues L49 to T115 lie on the Stromal side of the membrane. The disordered stretch occupies residues G68–L104. Residues K76–E88 are compositionally biased toward basic and acidic residues. Residues S116–L136 traverse the membrane as a helical segment. Residues K137–E145 lie on the Lumenal, thylakoid side of the membrane. A helical membrane pass occupies residues F146 to L166. The Stromal portion of the chain corresponds to V167–K180. The chain crosses the membrane as a helical span at residues V181–T201. Residues A202–K206 lie on the Lumenal, thylakoid side of the membrane. A helical membrane pass occupies residues F207 to A227. Residues S228–T275 lie on the Stromal side of the membrane. A helical membrane pass occupies residues V276–G296. Residues V297–P301 are Lumenal, thylakoid-facing. A helical membrane pass occupies residues F302–I322. Residues S323–S335 lie on the Stromal side of the membrane. A helical transmembrane segment spans residues I336–I356. S357 is a topological domain (lumenal, thylakoid). Residues T358–T378 form a helical membrane-spanning segment. Residues N379–S384 are Stromal-facing.

In terms of assembly, interacts with ALB3. In terms of tissue distribution, expressed in roots, rosette and cauline leaves, stems and flowers.

The protein localises to the plastid. The protein resides in the chloroplast thylakoid membrane. Functionally, integral thylakoid membrane protein that plays a crucial role in thylakoid membrane biogenesis and thylakoid formation in early chloroplast development. Is essential for de novo synthesis of photosystem II (PSII) core proteins and required for efficient insertion of thylakoid membrane proteins, presumably via interaction with ALB3. May assist synthesis of thylakoid membrane proteins at the membrane insertion step. This chain is Thylakoid membrane protein TERC, chloroplastic, found in Arabidopsis thaliana (Mouse-ear cress).